The primary structure comprises 343 residues: Ribosomal RNA small subunit methyltransferase C (343 aa).

This sequence belongs to the methyltransferase superfamily. RsmC family. In terms of assembly, monomer.

It localises to the cytoplasm. It carries out the reaction guanosine(1207) in 16S rRNA + S-adenosyl-L-methionine = N(2)-methylguanosine(1207) in 16S rRNA + S-adenosyl-L-homocysteine + H(+). Specifically methylates the guanine in position 1207 of 16S rRNA in the 30S particle. This Escherichia coli O81 (strain ED1a) protein is Ribosomal RNA small subunit methyltransferase C.